We begin with the raw amino-acid sequence, 247 residues long: ATP synthase subunit a, chloroplastic (247 aa).

A run of 5 helical transmembrane segments spans residues 38–58, 95–115, 134–154, 199–219, and 220–240; these read QVLI…AIAV, VPFI…GALL, INTT…AGLT, LVVV…VMFL, and GLFT…AYIG.

This sequence belongs to the ATPase A chain family. In terms of assembly, F-type ATPases have 2 components, CF(1) - the catalytic core - and CF(0) - the membrane proton channel. CF(1) has five subunits: alpha(3), beta(3), gamma(1), delta(1), epsilon(1). CF(0) has four main subunits: a, b, b' and c.

The protein localises to the plastid. The protein resides in the chloroplast thylakoid membrane. Key component of the proton channel; it plays a direct role in the translocation of protons across the membrane. The sequence is that of ATP synthase subunit a, chloroplastic (atpI) from Spinacia oleracea (Spinach).